We begin with the raw amino-acid sequence, 284 residues long: Orotidine 5'-phosphate decarboxylase (284 aa).

Residues Asp42, 64 to 66, 96 to 105, Tyr237, and Arg255 each bind substrate; these read KTH and DRKFADIGNT. Catalysis depends on Lys98, which acts as the Proton donor.

This sequence belongs to the OMP decarboxylase family.

It carries out the reaction orotidine 5'-phosphate + H(+) = UMP + CO2. The protein operates within pyrimidine metabolism; UMP biosynthesis via de novo pathway; UMP from orotate: step 2/2. The protein is Orotidine 5'-phosphate decarboxylase (URA3) of Magnusiomyces magnusii (Yeast).